Consider the following 1464-residue polypeptide: ABC transporter G family member 35 (1464 aa).

Residues 1 to 26 (MDAAAEMQKVVSLRRGGGGSSSRGAA) form a disordered region. In terms of domain architecture, ABC transporter 1 spans 173–446 (ANALGILPNK…FELMGFKCPE (274 aa)). 206–213 (GPPGSGKT) serves as a coordination point for ATP. In terms of domain architecture, ABC transmembrane type-2 1 spans 524-737 (ELLKANIDRE…AQNAISVNEF (214 aa)). Helical transmembrane passes span 542-562 (FVYI…MTVF), 575-595 (GVIF…NGLS), 630-650 (IPMS…VIGF), 662-682 (LLML…GGAA), 686-706 (IVAN…GGFI), 715-735 (WWIW…ISVN), and 774-794 (IGFG…TLAL). The region spanning 867 to 1119 (LTFDNIKYSV…ELIKYFEGIK (253 aa)) is the ABC transporter 2 domain. 912 to 919 (GVSGAGKT) contacts ATP. One can recognise an ABC transmembrane type-2 2 domain in the interval 1192–1406 (NQCLACLWKM…TLYGLVASQF (215 aa)). A run of 7 helical transmembrane segments spans residues 1213–1233 (AIRL…FWDL), 1243–1263 (LFNA…LNSQ), 1299–1319 (FPYT…MIGF), 1326–1346 (FFWY…YGMM), 1356–1376 (VASI…GFII), 1387–1407 (WYCW…SQFG), and 1436–1456 (VVAV…GFAI).

It belongs to the ABC transporter superfamily. ABCG family. PDR (TC 3.A.1.205) subfamily.

Its subcellular location is the membrane. Functionally, may be a general defense protein. The protein is ABC transporter G family member 35 of Oryza sativa subsp. japonica (Rice).